The following is a 271-amino-acid chain: Ribosomal RNA small subunit methyltransferase A (271 aa).

S-adenosyl-L-methionine is bound by residues His11, Leu13, Gly38, Glu58, Asp86, and Asn101.

It belongs to the class I-like SAM-binding methyltransferase superfamily. rRNA adenine N(6)-methyltransferase family. RsmA subfamily.

The protein localises to the cytoplasm. The enzyme catalyses adenosine(1518)/adenosine(1519) in 16S rRNA + 4 S-adenosyl-L-methionine = N(6)-dimethyladenosine(1518)/N(6)-dimethyladenosine(1519) in 16S rRNA + 4 S-adenosyl-L-homocysteine + 4 H(+). Functionally, specifically dimethylates two adjacent adenosines (A1518 and A1519) in the loop of a conserved hairpin near the 3'-end of 16S rRNA in the 30S particle. May play a critical role in biogenesis of 30S subunits. The polypeptide is Ribosomal RNA small subunit methyltransferase A (Helicobacter pylori (strain P12)).